We begin with the raw amino-acid sequence, 280 residues long: SPX domain-containing protein 2 (280 aa).

The region spanning 1-162 is the SPX domain; it reads MKFGKSLSSQ…GSMIRLPFVQ (162 aa). 2 disordered regions span residues 191–244 and 257–280; these read PTNE…KSTV and GSSTVSVFSLPPLHGSNGQDEPGR.

As to quaternary structure, interacts (via SPX domain) with PHR2 (via C-terminus). Interacts with RLI1 in the nucleus to prevents its positive regulation of leaf inclination during phosphate (Pi) starvation. In terms of tissue distribution, predominantly expressed in roots, leaves and seeds. Localized in leaves lamina joints.

It is found in the nucleus. Its function is as follows. Inhibits PHR2 DNA-binding activity via a phosphate (Pi)-dependent protein interaction. Together with SPX1, plays a negative role in the regulation of leaf inclination by preventing RLI1 transcription factor activity in Pi depleted conditions. In Oryza sativa subsp. japonica (Rice), this protein is SPX domain-containing protein 2.